The chain runs to 117 residues: UPF0102 protein Rsph17025_0472 (117 aa).

It belongs to the UPF0102 family.

The sequence is that of UPF0102 protein Rsph17025_0472 from Cereibacter sphaeroides (strain ATCC 17025 / ATH 2.4.3) (Rhodobacter sphaeroides).